Reading from the N-terminus, the 683-residue chain is ATP-dependent zinc metalloprotease FtsH (683 aa).

Positions 1–43 (MEDKNIKDDEILDDQNDNQEDVQNQDEEKEIKPKKPKKKVYIS) are disordered. Topologically, residues 1–70 (MEDKNIKDDE…KNNNISFRVK (70 aa)) are cytoplasmic. Over residues 10 to 28 (EILDDQNDNQEDVQNQDEE) the composition is skewed to acidic residues. Residues 71 to 91 (PPIFFFLILILMSTLFYFYGN) traverse the membrane as a helical segment. The Periplasmic portion of the chain corresponds to 92–174 (KTALFQEKRE…IVVLGTPVSS (83 aa)). The helical transmembrane segment at 175 to 195 (IITRAIFSFAPLFMLLFFFYF) threads the bilayer. Over 196-683 (INKKMMGSSG…LDDEQLEKYY (488 aa)) the chain is Cytoplasmic. Residue 270–277 (GEPGTGKT) participates in ATP binding. Residue His-494 coordinates Zn(2+). Glu-495 is a catalytic residue. Residues His-498 and Asp-569 each contribute to the Zn(2+) site.

This sequence in the central section; belongs to the AAA ATPase family. The protein in the C-terminal section; belongs to the peptidase M41 family. Homohexamer. Zn(2+) is required as a cofactor.

It is found in the cell inner membrane. Its function is as follows. Acts as a processive, ATP-dependent zinc metallopeptidase for both cytoplasmic and membrane proteins. Plays a role in the quality control of integral membrane proteins. This chain is ATP-dependent zinc metalloprotease FtsH, found in Streptobacillus moniliformis (strain ATCC 14647 / DSM 12112 / NCTC 10651 / 9901).